The chain runs to 218 residues: Large ribosomal subunit protein uL2c (218 aa).

Residues 165–192 (GVVKNPVDHPHGGGEGRSPIGRSHPVTP) are disordered.

Belongs to the universal ribosomal protein uL2 family. In terms of assembly, part of the 50S ribosomal subunit.

It localises to the plastid. The protein resides in the chloroplast. The sequence is that of Large ribosomal subunit protein uL2c (rpl2) from Bigelowiella natans (Pedinomonas minutissima).